The sequence spans 263 residues: Acyl-[acyl-carrier-protein]--UDP-N-acetylglucosamine O-acyltransferase (263 aa).

Belongs to the transferase hexapeptide repeat family. LpxA subfamily. As to quaternary structure, homotrimer.

The protein resides in the cytoplasm. It carries out the reaction a (3R)-hydroxyacyl-[ACP] + UDP-N-acetyl-alpha-D-glucosamine = a UDP-3-O-[(3R)-3-hydroxyacyl]-N-acetyl-alpha-D-glucosamine + holo-[ACP]. The protein operates within glycolipid biosynthesis; lipid IV(A) biosynthesis; lipid IV(A) from (3R)-3-hydroxytetradecanoyl-[acyl-carrier-protein] and UDP-N-acetyl-alpha-D-glucosamine: step 1/6. Its function is as follows. Involved in the biosynthesis of lipid A, a phosphorylated glycolipid that anchors the lipopolysaccharide to the outer membrane of the cell. This chain is Acyl-[acyl-carrier-protein]--UDP-N-acetylglucosamine O-acyltransferase, found in Campylobacter jejuni subsp. jejuni serotype O:6 (strain 81116 / NCTC 11828).